An 89-amino-acid chain; its full sequence is Small ribosomal subunit protein bS16c (89 aa).

It belongs to the bacterial ribosomal protein bS16 family.

The protein localises to the plastid. The protein resides in the chloroplast. The chain is Small ribosomal subunit protein bS16c from Morus indica (Mulberry).